Here is a 255-residue protein sequence, read N- to C-terminus: MEDKQAKPLRILLSNDDGVFAEGIRTLASELRTLAEVIIVAPDRNRSGASNSLTLEQPLRVTCVEENVYSVQGTPTDCVHFALNELLKNDLPDLVLSGINHGANLGDDVLYSGTVAAAMEGHFLGVQSIAFSLVGKTHFKTAATIAKRIVEQHLAKPIPTNRLLNINIPDLPLEQLEEIRVTRLGARHHAENMIKQLDPRGHEIYWLGPPGKEQDAGEGTDFHAIEQGYVSITPLQVDLTAHESLRAMDTWLKEK.

4 residues coordinate a divalent metal cation: Asp-16, Asp-17, Ser-47, and Asn-100.

Belongs to the SurE nucleotidase family. Requires a divalent metal cation as cofactor.

It is found in the cytoplasm. It carries out the reaction a ribonucleoside 5'-phosphate + H2O = a ribonucleoside + phosphate. In terms of biological role, nucleotidase that shows phosphatase activity on nucleoside 5'-monophosphates. This is 5'-nucleotidase SurE from Vibrio vulnificus (strain CMCP6).